An 858-amino-acid chain; its full sequence is Leucine--tRNA ligase (858 aa).

The 'HIGH' region signature appears at 42 to 52 (PYPSGRLHMGH). The 'KMSKS' region signature appears at 618 to 622 (KMSKS). Lys621 contacts ATP.

Belongs to the class-I aminoacyl-tRNA synthetase family.

The protein resides in the cytoplasm. It catalyses the reaction tRNA(Leu) + L-leucine + ATP = L-leucyl-tRNA(Leu) + AMP + diphosphate. The chain is Leucine--tRNA ligase from Vibrio cholerae serotype O1 (strain ATCC 39541 / Classical Ogawa 395 / O395).